We begin with the raw amino-acid sequence, 101 residues long: Secreted RxLR effector protein 64 (101 aa).

The signal sequence occupies residues M1–G23. Residues R48–R51 carry the RxLR motif. The chain crosses the membrane as a helical span at residues L67–F87.

It belongs to the RxLR effector family.

Its subcellular location is the secreted. It localises to the host cytoplasm. It is found in the host nucleus. The protein resides in the membrane. Functionally, effector that acts as a broad suppressor of cell death to interrupt plant immunity. Inhibits cell death induced by cell death-inducing proteins, including the PAMP elicitor INF1 from P.infestans. The chain is Secreted RxLR effector protein 64 from Plasmopara viticola (Downy mildew of grapevine).